A 214-amino-acid polypeptide reads, in one-letter code: Phosphoenolpyruvate guanylyltransferase (214 aa).

Phosphoenolpyruvate is bound by residues T148, G163, and S166.

Belongs to the CofC family.

It catalyses the reaction phosphoenolpyruvate + GTP + H(+) = enolpyruvoyl-2-diphospho-5'-guanosine + diphosphate. The protein operates within cofactor biosynthesis; coenzyme F420 biosynthesis. In terms of biological role, guanylyltransferase that catalyzes the activation of phosphoenolpyruvate (PEP) as enolpyruvoyl-2-diphospho-5'-guanosine, via the condensation of PEP with GTP. It is involved in the biosynthesis of coenzyme F420, a hydride carrier cofactor. In Mycobacterium tuberculosis (strain KZN 1435 / MDR), this protein is Phosphoenolpyruvate guanylyltransferase.